A 428-amino-acid polypeptide reads, in one-letter code: MSRNQQLFEQSQTLIPGGVNSPVRAFGSVGGTPVFFKRGLGARLWDEDGKEYIDYVGSWGPMILGHAQPDVIAAVQATAANSLSFGAPTALELEMAQLITQLVPSMEQVRLVSSGTEATMSAIRLARGFTSRSKILKFEGCYHGHADSLLVKAGSGALTFGQPSSAGVPPELAAHTLTLPYNDVQALEHLFEELGKEIACVILEPVAGNMNLVRPTPEFLGALRSLCTHSGTLLIFDEVMTGFRVALGGAQQLFGIKPDLTTLGKVIGGGLPVGAFGGRADVMAFLAPLGPVYQAGTLSGNPVAVAAGLATLKQLQRPGFHEELALKTRQLTDGLARAARDAGVTFSAQSVGGMFGLYFSAECPASFAEVMQSDKQAFNRFFHGMLEAGVYLAPSAFEAGFVSIAHSEADISQTIVSAQGVFSRINDQ.

Residue K265 is modified to N6-(pyridoxal phosphate)lysine.

The protein belongs to the class-III pyridoxal-phosphate-dependent aminotransferase family. HemL subfamily. As to quaternary structure, homodimer. Pyridoxal 5'-phosphate serves as cofactor.

It is found in the cytoplasm. It carries out the reaction (S)-4-amino-5-oxopentanoate = 5-aminolevulinate. It participates in porphyrin-containing compound metabolism; protoporphyrin-IX biosynthesis; 5-aminolevulinate from L-glutamyl-tRNA(Glu): step 2/2. The polypeptide is Glutamate-1-semialdehyde 2,1-aminomutase (Methylobacillus flagellatus (strain ATCC 51484 / DSM 6875 / VKM B-1610 / KT)).